A 684-amino-acid chain; its full sequence is Actin-related protein 5 (684 aa).

A coiled-coil region spans residues 262 to 469 (KEKSVIIQLP…ARQKQKQKAN (208 aa)). Disordered stretches follow at residues 392–443 (KEKK…PEHY) and 481–500 (VNPTNHGNYGEKGEEVEDPE). A compositionally biased stretch (basic and acidic residues) spans 402-443 (SMKDGRLAQKRKRDEEKEKEKEKEEERDRQEEESFLKDPEHY).

Belongs to the actin family. ARP5 subfamily. As to quaternary structure, component of the chromatin-remodeling Ino80 complex.

Its subcellular location is the nucleus. In terms of biological role, proposed core component of the chromatin remodeling Ino80 complex which is involved in transcriptional regulation, DNA replication and probably DNA repair. In Dictyostelium discoideum (Social amoeba), this protein is Actin-related protein 5 (arpE).